A 194-amino-acid chain; its full sequence is HTH-type transcriptional regulator BetI (194 aa).

The HTH tetR-type domain maps to 8–68 (EIRRAQLIDA…ATMRHVLRDL (61 aa)). A DNA-binding region (H-T-H motif) is located at residues 31 to 50 (TLASVAQRANISTGIVSHYF).

It functions in the pathway amine and polyamine biosynthesis; betaine biosynthesis via choline pathway [regulation]. Repressor involved in the biosynthesis of the osmoprotectant glycine betaine. It represses transcription of the choline transporter BetT and the genes of BetAB involved in the synthesis of glycine betaine. This chain is HTH-type transcriptional regulator BetI, found in Burkholderia ambifaria (strain MC40-6).